The following is a 346-amino-acid chain: Elongation factor Ts (346 aa).

Residues 80–83 form an involved in Mg(2+) ion dislocation from EF-Tu region; the sequence is TDFV.

The protein belongs to the EF-Ts family.

It is found in the cytoplasm. In terms of biological role, associates with the EF-Tu.GDP complex and induces the exchange of GDP to GTP. It remains bound to the aminoacyl-tRNA.EF-Tu.GTP complex up to the GTP hydrolysis stage on the ribosome. This Streptococcus thermophilus (strain CNRZ 1066) protein is Elongation factor Ts.